Reading from the N-terminus, the 623-residue chain is Immunity-related GTPase family Q protein (623 aa).

The cysteines at positions 152 and 158 are disulfide-linked. A coiled-coil region spans residues 155–180; the sequence is SDGCEELERLRAALQSQAEALRRLLP. An LIR 1 motif is present at residues 186 to 189; the sequence is FEVL. The residue at position 203 (T203) is a Phosphothreonine. The 227-residue stretch at 223–449 folds into the IRG-type G domain; the sequence is ARLDLAVAGK…PGLCEWLRRA (227 aa). The disordered stretch occupies residues 334 to 393; it reads EGEDPECLGEGKMENPKGESLKNAGGGGLENALSKGREKCSAGSQKAGSGEGPGKAGSEG. Residues 342 to 353 show a composition bias toward basic and acidic residues; that stretch reads GEGKMENPKGES. The short motif at 421–424 is the LIR 2 element; it reads WEVL.

The protein belongs to the TRAFAC class dynamin-like GTPase superfamily. IRG family. Interacts (via LIR motif 1) with GABARAPL2. Interacts (via LIR motif 2) with MAP1LC3B/LC3B.

It localises to the lysosome. The protein resides in the cytoplasmic vesicle. The protein localises to the autophagosome. In terms of biological role, autophagy receptor that specifically promotes clearance of misfolded MHC class I molecules by targeting them to the lysosome for degradation. Acts as a molecular adapter that specifically recognizes and binds (1) misfolded MHC class I molecules following their ubiquitination, as well as (2) autophagy-related proteins, promoting the recruitment of misfolded MHC class I molecules to autophagy machinery for degradation. Degradation of misfolded MHC class I molecules is essential to prevent accumulation of defective MHC class I complexes at the surface of CD8(+) T-cells and prevent a stronger T-cell-mediated response. In contrast to other members of the family, does not show GTPase activity. This Homo sapiens (Human) protein is Immunity-related GTPase family Q protein.